Consider the following 71-residue polypeptide: Venom peptide 2-long (71 aa).

The N-terminal stretch at 1–24 is a signal peptide; sequence MKQSIIIALFATIAVMACLQMVAA. 5 AXPX repeats span residues 24–27, 32–35, 44–47, 50–53, and 54–57; these read AVPA, AAPG, ASPE, and AEPI. Residues 25–54 constitute a propeptide that is removed on maturation; sequence VPAPVPEAAPGPVAEAEAYASPEALASPEA. L68 carries the post-translational modification Leucine amide.

Belongs to the MCD family. Protonectin subfamily. As to expression, expressed by the venom gland.

It localises to the secreted. Its subcellular location is the target cell membrane. Antimicrobial peptide with strong activity against the fungus B.cinerea (MIC=0.5 ug/ml), and poor activities against the fungus C.albicans (MIC=100 ug/ml), the Gram-positive bacterium S.aureus (MIC=125 ug/ml) and the Gram-negative bacterium E.coli (MIC=125 ug/ml). In terms of biological role, antimicrobial peptide with strong activity against the fungus B.cinerea (MIC=0.4 uM), and poor activities against the fungus C.albicans (MIC=16 uM), the Gram-positive bacterium S.aureus (MIC=20 uM) and the Gram-negative bacterium E.coli (MIC=79 uM). Shows cytolytic activity against insect cell lines. Has potent hemolytic activity against ovine erythrocytes. Has potent hemolytic activity against human erythrocytes (EC(50)=31 uM). In vivo, peptide injection in the vicinity of the head and thorax of lepidopteran larvae induces feeding disorder followed by death due to starvation. This Orancistrocerus drewseni (Solitary wasp) protein is Venom peptide 2-long.